Consider the following 1092-residue polypeptide: Probable cellulose synthase A catalytic subunit 5 [UDP-forming] (1092 aa).

The Cytoplasmic portion of the chain corresponds to 1–279 (MEASAGLVAG…SSSLVNPYRM (279 aa)). Residues Cys-39, Cys-42, Cys-58, Cys-61, Cys-66, Cys-69, Cys-81, and Cys-84 each contribute to the Zn(2+) site. Residues 39 to 85 (CQICGDDVGLTPDGEPFVACNECAFPVCRDCYEYERREGTQNCPQCK) form an RING-type; degenerate zinc finger. Residues 280 to 300 (IIIIRLVVLGFFFHYRVMHPV) traverse the membrane as a helical segment. Topologically, residues 301 to 302 (PD) are extracellular. A helical membrane pass occupies residues 303-323 (AFALWLISVICEIWFAMSWIL). Residues 324–868 (DQFPKWFPIE…CLERFSYINS (545 aa)) lie on the Cytoplasmic side of the membrane. Positions 362, 368, 369, and 398 each coordinate UDP-alpha-D-glucose. The active site involves Asp-398. Residues 450 to 479 (NFVRERRAMKREYEEFKVRINALVAKAQKV) adopt a coiled-coil conformation. A UDP-alpha-D-glucose-binding site is contributed by Lys-539. Lys-540 and Asp-564 together coordinate Mn(2+). The active site involves Asp-792. Residues 869-889 (IVYPWTSIPLLAYCTLPAICL) form a helical membrane-spanning segment. The Extracellular portion of the chain corresponds to 890–901 (LTGKFITPELTN). The chain crosses the membrane as a helical span at residues 902–922 (IASLWFMSLFICIFATGILEM). The Cytoplasmic portion of the chain corresponds to 923–938 (RWSGVGIDDWWRNEQF). The helical transmembrane segment at 939 to 959 (WVIGGVSSHLFAVFQGLLKVI) threads the bilayer. Residues 960 to 987 (AGIDTSFTVTSKGGDDEEFSELYTFKWT) lie on the Extracellular side of the membrane. A helical membrane pass occupies residues 988 to 1008 (TLLIPPTTLLLLNFIGVVAGV). Over 1009–1019 (SNAINNGYESW) the chain is Cytoplasmic. The chain crosses the membrane as a helical span at residues 1020 to 1040 (GPLFGKLFFAFWVIVHLYPFL). The Extracellular portion of the chain corresponds to 1041 to 1049 (KGLVGRQNR). The chain crosses the membrane as a helical span at residues 1050-1070 (TPTIVIVWSILLASIFSLLWV). At 1071-1092 (RIDPFLAKNDGPLLEECGLDCN) the chain is on the cytoplasmic side.

This sequence belongs to the glycosyltransferase 2 family. Plant cellulose synthase subfamily. Mn(2+) is required as a cofactor. Requires Zn(2+) as cofactor.

Its subcellular location is the cell membrane. The enzyme catalyses [(1-&gt;4)-beta-D-glucosyl](n) + UDP-alpha-D-glucose = [(1-&gt;4)-beta-D-glucosyl](n+1) + UDP + H(+). It participates in glycan metabolism; plant cellulose biosynthesis. Its function is as follows. Probable catalytic subunit of cellulose synthase terminal complexes ('rosettes'), required for beta-1,4-glucan microfibril crystallization, a major mechanism of the cell wall formation. The polypeptide is Probable cellulose synthase A catalytic subunit 5 [UDP-forming] (CESA5) (Oryza sativa subsp. indica (Rice)).